Reading from the N-terminus, the 154-residue chain is Protein X (154 aa).

Residues 68–117 (PCALRFTSARRMETTVNAHWNLPKVLHKRTLGLSAMSTTDLEAYFKDCVF) form a mitochondrial targeting sequence region.

It belongs to the orthohepadnavirus protein X family. As to quaternary structure, may form homodimer. May interact with host CEBPA, CFLAR, CREB1, DDB1, E4F1, HBXIP, HSPD1/HSP60, NFKBIA, POLR2E and SMAD4. Interacts with host SMC5-SMC6 complex and induces its degradation. Interacts with host TRPC4AP; leading to prevent ubiquitination of TRPC4AP. Interacts with host PLSCR1; this interaction promotes ubiquitination and degradation of HBx and impairs HBx-mediated cell proliferation. A fraction may be phosphorylated in insect cells and HepG2 cells, a human hepatoblastoma cell line. Phosphorylated in vitro by host protein kinase C or mitogen-activated protein kinase. N-acetylated in insect cells.

Its subcellular location is the host cytoplasm. The protein resides in the host nucleus. It is found in the host mitochondrion. In terms of biological role, multifunctional protein that plays a role in silencing host antiviral defenses and promoting viral transcription. Does not seem to be essential for HBV infection. May be directly involved in development of cirrhosis and liver cancer (hepatocellular carcinoma). Most of cytosolic activities involve modulation of cytosolic calcium. The effect on apoptosis is controversial depending on the cell types in which the studies have been conducted. May induce apoptosis by localizing in mitochondria and causing loss of mitochondrial membrane potential. May also modulate apoptosis by binding host CFLAR, a key regulator of the death-inducing signaling complex (DISC). Promotes viral transcription by using the host E3 ubiquitin ligase DDB1 to target the SMC5-SMC6 complex to proteasomal degradation. This host complex would otherwise bind to viral episomal DNA, and prevents its transcription. Moderately stimulates transcription of many different viral and cellular transcription elements. Promoters and enhancers stimulated by HBx contain DNA binding sites for NF-kappa-B, AP-1, AP-2, c-EBP, ATF/CREB, or the calcium-activated factor NF-AT. The polypeptide is Protein X (Hepatitis B virus genotype B2 (isolate Vietnam/9873/1997) (HBV-B)).